The sequence spans 162 residues: tRNA (cytidine(34)-2'-O)-methyltransferase (162 aa).

Positions 80, 102, 124, and 132 each coordinate S-adenosyl-L-methionine.

This sequence belongs to the class IV-like SAM-binding methyltransferase superfamily. RNA methyltransferase TrmH family. TrmL subfamily. In terms of assembly, homodimer.

The protein localises to the cytoplasm. It carries out the reaction cytidine(34) in tRNA + S-adenosyl-L-methionine = 2'-O-methylcytidine(34) in tRNA + S-adenosyl-L-homocysteine + H(+). It catalyses the reaction 5-carboxymethylaminomethyluridine(34) in tRNA(Leu) + S-adenosyl-L-methionine = 5-carboxymethylaminomethyl-2'-O-methyluridine(34) in tRNA(Leu) + S-adenosyl-L-homocysteine + H(+). Its function is as follows. Methylates the ribose at the nucleotide 34 wobble position in the two leucyl isoacceptors tRNA(Leu)(CmAA) and tRNA(Leu)(cmnm5UmAA). Catalyzes the methyl transfer from S-adenosyl-L-methionine to the 2'-OH of the wobble nucleotide. This Acidovorax sp. (strain JS42) protein is tRNA (cytidine(34)-2'-O)-methyltransferase.